A 122-amino-acid polypeptide reads, in one-letter code: uncharacterized protein (122 aa).

Helical transmembrane passes span 36-56 and 72-92; these read SVRSIIVVNILVFAGILYSQF and AVFLFICPCLLYFYQGIFSTD.

The protein localises to the membrane. This is an uncharacterized protein from Saccharomyces cerevisiae (strain ATCC 204508 / S288c) (Baker's yeast).